An 84-amino-acid polypeptide reads, in one-letter code: Putative antitoxin VapB7 (84 aa).

Its function is as follows. Antitoxin component of a possible type II toxin-antitoxin (TA) system. The cognate toxin is VapC7. In Mycobacterium tuberculosis (strain ATCC 25618 / H37Rv), this protein is Putative antitoxin VapB7 (vapB7).